A 401-amino-acid chain; its full sequence is MEALGIIVEYNPLHNGHLYHLEESIKLTKCQYVVAVMSGNFVQRGEPAIVDKWKRAEMALKAGVDLVIELPVVYATSTAENFAYGAVKLLDSLKVIDCIAFGSEEGDLEKLSKIADILLEEPPDYKRALKENLGKGLTFAKARELALVKVTGDESISKTLQTSNNILGIEYLKALKKIKSSIVPFTIKRRGALYTSLKLEGEFASATSIRKAIEEKGIKAVKNYVPDFTLKILERAFKEGQGPVYLQDFSPIILYLLRSGHPLENIFDVAEGIDNKIYKAASMTNNIKDLIKLTKSKRYTESRIRHILLHLLLKIDKKLFKEFDGPNYIRVLGFSEKGKTILKEIKKKTELPIITKVAQYKSKIEDSRMFERDLFATDVYTLAYKNFAISKLDFFHPIIKL.

Residues 7–20 (IVEY…HLYH), Gly-102, Asn-164, and Arg-189 each bind ATP.

This sequence belongs to the TmcAL family.

The protein localises to the cytoplasm. The catalysed reaction is cytidine(34) in elongator tRNA(Met) + acetate + ATP = N(4)-acetylcytidine(34) in elongator tRNA(Met) + AMP + diphosphate. Its function is as follows. Catalyzes the formation of N(4)-acetylcytidine (ac(4)C) at the wobble position of elongator tRNA(Met), using acetate and ATP as substrates. First activates an acetate ion to form acetyladenylate (Ac-AMP) and then transfers the acetyl group to tRNA to form ac(4)C34. The chain is tRNA(Met) cytidine acetate ligase from Caldanaerobacter subterraneus subsp. tengcongensis (strain DSM 15242 / JCM 11007 / NBRC 100824 / MB4) (Thermoanaerobacter tengcongensis).